The primary structure comprises 166 residues: Phospholipase A2 inhibitor clone 02/03/06/07 (166 aa).

The first 19 residues, 1–19 (MRLILLSGLLLLGTFLANG), serve as a signal peptide directing secretion. The region spanning 46 to 161 (LKHAFLTVHK…CDDNLLVVCE (116 aa)) is the C-type lectin domain. 2 disulfides stabilise this stretch: cysteine 83–cysteine 160 and cysteine 138–cysteine 152. N-linked (GlcNAc...) asparagine glycosylation occurs at asparagine 122.

The protein belongs to the alpha-type phospholipase A2 inhibitor family. As to quaternary structure, homotrimer; non-covalently linked. In terms of tissue distribution, expressed by the liver.

It is found in the secreted. Functionally, this phospholipase A2 inhibitor binds directly phospholipase A2 in the presence or absence of calcium. The chain is Phospholipase A2 inhibitor clone 02/03/06/07 from Lachesis muta muta (Bushmaster).